The sequence spans 266 residues: Undecaprenyl-diphosphatase (266 aa).

A run of 8 helical transmembrane segments spans residues 1–21 (MTLT…FLPI), 39–59 (QGLA…MIYF), 87–107 (WWVI…KAFI), 111–131 (ARSA…LWYA), 150–172 (LIVG…ITMT), 187–207 (FSFL…TLDL), 218–238 (ALIV…YLFL), and 244–264 (IGML…LLFV).

This sequence belongs to the UppP family.

The protein localises to the cell inner membrane. It catalyses the reaction di-trans,octa-cis-undecaprenyl diphosphate + H2O = di-trans,octa-cis-undecaprenyl phosphate + phosphate + H(+). Catalyzes the dephosphorylation of undecaprenyl diphosphate (UPP). Confers resistance to bacitracin. The protein is Undecaprenyl-diphosphatase of Pseudoalteromonas atlantica (strain T6c / ATCC BAA-1087).